The sequence spans 127 residues: Major sperm protein 63 (127 aa).

The residue at position 2 (A2) is an N-acetylalanine. The MSP domain occupies 9–126 (DIQTQPGTKI…RRKNLPIEYN (118 aa)).

Sperm.

It localises to the cell projection. The protein resides in the pseudopodium. The protein localises to the cytoplasm. Its subcellular location is the cytoskeleton. Central component in molecular interactions underlying sperm crawling. Forms an extensive filament system that extends from sperm villipoda, along the leading edge of the pseudopod. This Caenorhabditis elegans protein is Major sperm protein 63 (msp-63).